Here is a 313-residue protein sequence, read N- to C-terminus: Homoserine O-succinyltransferase (313 aa).

The Acyl-thioester intermediate role is filled by C142. Substrate is bound by residues K163 and S192. The active-site Proton acceptor is H235. The active site involves E237. A substrate-binding site is contributed by R249.

Belongs to the MetA family.

The protein localises to the cytoplasm. The catalysed reaction is L-homoserine + succinyl-CoA = O-succinyl-L-homoserine + CoA. Its pathway is amino-acid biosynthesis; L-methionine biosynthesis via de novo pathway; O-succinyl-L-homoserine from L-homoserine: step 1/1. In terms of biological role, transfers a succinyl group from succinyl-CoA to L-homoserine, forming succinyl-L-homoserine. This chain is Homoserine O-succinyltransferase, found in Shewanella sp. (strain MR-4).